The chain runs to 662 residues: Protein transport Sec1b (662 aa).

This sequence belongs to the STXBP/unc-18/SEC1 family.

Functionally, involved in the vesicle trafficking. Binds syntaxins. This Arabidopsis thaliana (Mouse-ear cress) protein is Protein transport Sec1b (SEC1B).